The primary structure comprises 213 residues: Thymidylate kinase (213 aa).

Residue Gly-10 to Thr-17 participates in ATP binding.

It belongs to the thymidylate kinase family.

It catalyses the reaction dTMP + ATP = dTDP + ADP. Phosphorylation of dTMP to form dTDP in both de novo and salvage pathways of dTTP synthesis. This chain is Thymidylate kinase, found in Klebsiella pneumoniae subsp. pneumoniae (strain ATCC 700721 / MGH 78578).